The sequence spans 132 residues: Small ribosomal subunit protein bS6 (132 aa).

The tract at residues 96–132 (HAEGPSIQMQKRDERERGDRGDRPDRGDRGERGGFRR) is disordered. The segment covering 105 to 132 (QKRDERERGDRGDRPDRGDRGERGGFRR) has biased composition (basic and acidic residues).

This sequence belongs to the bacterial ribosomal protein bS6 family.

Functionally, binds together with bS18 to 16S ribosomal RNA. This is Small ribosomal subunit protein bS6 from Cereibacter sphaeroides (strain ATCC 17025 / ATH 2.4.3) (Rhodobacter sphaeroides).